The following is a 616-amino-acid chain: Dihydroxy-acid dehydratase (616 aa).

Asp81 provides a ligand contact to Mg(2+). Cys122 contacts [2Fe-2S] cluster. Mg(2+)-binding residues include Asp123 and Lys124. Lys124 is subject to N6-carboxylysine. Cys196 is a binding site for [2Fe-2S] cluster. Residue Glu496 participates in Mg(2+) binding. Ser522 serves as the catalytic Proton acceptor.

It belongs to the IlvD/Edd family. Homodimer. It depends on [2Fe-2S] cluster as a cofactor. The cofactor is Mg(2+).

It catalyses the reaction (2R)-2,3-dihydroxy-3-methylbutanoate = 3-methyl-2-oxobutanoate + H2O. The catalysed reaction is (2R,3R)-2,3-dihydroxy-3-methylpentanoate = (S)-3-methyl-2-oxopentanoate + H2O. The protein operates within amino-acid biosynthesis; L-isoleucine biosynthesis; L-isoleucine from 2-oxobutanoate: step 3/4. It participates in amino-acid biosynthesis; L-valine biosynthesis; L-valine from pyruvate: step 3/4. Functions in the biosynthesis of branched-chain amino acids. Catalyzes the dehydration of (2R,3R)-2,3-dihydroxy-3-methylpentanoate (2,3-dihydroxy-3-methylvalerate) into 2-oxo-3-methylpentanoate (2-oxo-3-methylvalerate) and of (2R)-2,3-dihydroxy-3-methylbutanoate (2,3-dihydroxyisovalerate) into 2-oxo-3-methylbutanoate (2-oxoisovalerate), the penultimate precursor to L-isoleucine and L-valine, respectively. The protein is Dihydroxy-acid dehydratase of Streptomyces griseus subsp. griseus (strain JCM 4626 / CBS 651.72 / NBRC 13350 / KCC S-0626 / ISP 5235).